A 486-amino-acid chain; its full sequence is Transcriptional adapter 2-beta (486 aa).

The ZZ-type zinc finger occupies 4 to 59 (LGKKYCVNCLADVTNLRIRCAECQDIELCPECFSAGAEIGNHRRWHGYQQVDGGRF). C9, C12, C23, C26, C32, C35, H45, and H49 together coordinate Zn(2+). In terms of domain architecture, SANT spans 65–118 (EAEGGWTSREEQSLLDAIEQYGFGNWEDMAAHVGASRTPQEVMDHYVSMYIHGN). 2 disordered regions span residues 237-291 (KKDK…EKGQ) and 343-377 (EYEAARHKREKRKENKSIAGSKRGSSGGGGGTAGL). Composition is skewed to gly residues over residues 247–262 (GTVGVGGPGGAVGSGS) and 367–377 (SSGGGGGTAGL).

The protein localises to the nucleus. Functionally, transcriptional coactivator. In Danio rerio (Zebrafish), this protein is Transcriptional adapter 2-beta (tada2b).